Consider the following 562-residue polypeptide: Matrix metalloproteinase-25 (562 aa).

Positions 1 to 21 are cleaved as a signal peptide; that stretch reads MRLRLRLLALLLLLLAPPARA. Positions 22–107 are excised as a propeptide; that stretch reads PKPSAQDVSL…VAGLVRRRRR (86 aa). Residues 88-95 carry the Cysteine switch motif; that stretch reads PRCSLPDV. Residues C90 and H233 each coordinate Zn(2+). Residue E234 is part of the active site. Zn(2+)-binding residues include H237 and H243. The disordered stretch occupies residues 278-313; it reads LYGKAPQTPYDKPTRKPLAPPPQPPASPTHSPSFPI. Pro residues predominate over residues 295 to 304; that stretch reads LAPPPQPPAS. Hemopexin repeat units lie at residues 314 to 363, 367 to 412, 413 to 461, and 462 to 508; these read PDRC…WEGL, VRVV…GLPP, GEEV…EGAP, and PSPD…WLDC. C317 and C508 are joined by a disulfide. The disordered stretch occupies residues 490 to 526; it reads SIKTEPDAPQPMGPNWLDCPAPSSGPRAPRPPKATPV. Residue A539 is the site of GPI-anchor amidated alanine attachment. Positions 540–562 are cleaved as a propeptide — removed in mature form; the sequence is AGRWPAPIPLLLLPLLVGGVASR.

It belongs to the peptidase M10A family. It depends on Zn(2+) as a cofactor. The cofactor is Ca(2+). The precursor is cleaved by a furin endopeptidase. As to expression, expressed predominantly in leukocytes, lung and spleen. Expressed also in colon carcinoma, astrocytoma and glioblastomas.

It is found in the cell membrane. The protein resides in the secreted. The protein localises to the extracellular space. Its subcellular location is the extracellular matrix. Its function is as follows. May activate progelatinase A. This is Matrix metalloproteinase-25 (MMP25) from Homo sapiens (Human).